Here is a 292-residue protein sequence, read N- to C-terminus: Elongation factor Ts (292 aa).

Residues 80–83 (TDFV) form an involved in Mg(2+) ion dislocation from EF-Tu region.

This sequence belongs to the EF-Ts family.

It is found in the cytoplasm. In terms of biological role, associates with the EF-Tu.GDP complex and induces the exchange of GDP to GTP. It remains bound to the aminoacyl-tRNA.EF-Tu.GTP complex up to the GTP hydrolysis stage on the ribosome. This chain is Elongation factor Ts, found in Ralstonia pickettii (strain 12J).